The chain runs to 66 residues: MKTKAVLMLMLLVLVAATLVQGEPEPSYVGDCGSNGGSCVSSYCPYGNRLNYFCPLGRTCCRRSYG.

Residues 1-22 form the signal peptide; sequence MKTKAVLMLMLLVLVAATLVQG. Residues 23–26 constitute a propeptide that is removed on maturation; sequence EPEP. Intrachain disulfides connect C32–C54, C39–C61, and C44–C60. Tyrosine amide is present on Y65.

Forms dimers and higher-order oligomers. Contains 3 disulfide bonds.

In terms of biological role, antimicrobial peptide. Has antibacterial activity against Gram-positive bacteria S.aureus ATCC 29737 and B.subtilis ATCC 6633 as well as against Gram-negative bacteria E.coli ATCC 10536 and K.pneumoniae ATCC 10031. The polypeptide is Panusin (Panulirus argus (Caribbean spiny lobster)).